Reading from the N-terminus, the 384-residue chain is Protein NDRG1 (384 aa).

Serine 2 carries the N-acetylserine modification. 3 positions are modified to phosphoserine: serine 2, serine 319, and serine 326. The interval 325–384 is disordered; sequence RSRTASGSSVTSLEGARSRSHTSEGTRSRSHTSEGTRLDIIPNSGGPGSSAGPNSTEVSC. The span at 327 to 336 shows a compositional bias: polar residues; sequence RTASGSSVTS. Residue threonine 328 is modified to Phosphothreonine; by SGK1. Residues serine 330 and serine 332 each carry the phosphoserine; by SGK1 modification. Position 333 is a phosphoserine (serine 333). A Phosphothreonine modification is found at threonine 335. Phosphoserine is present on residues serine 336 and serine 342. Repeat copies occupy residues 339–348 and 349–358. A 2 X 10 AA tandem repeats of G-[PST]-R-S-R-S-H-T-S-E region spans residues 339 to 358; that stretch reads GARSRSHTSEGTRSRSHTSE. Over residues 345–361 the composition is skewed to basic and acidic residues; sequence HTSEGTRSRSHTSEGTR. Position 346 is a phosphothreonine; by SGK1 (threonine 346). Serine 352 is modified (phosphoserine). Position 356 is a phosphothreonine; by SGK1 (threonine 356). Residues 374–384 show a composition bias toward low complexity; sequence SAGPNSTEVSC.

Belongs to the NDRG family. Interacts with RAB4A (membrane-bound form); the interaction involves NDRG1 in vesicular recycling of CDH1. Interacts with APOA1, APOA2, PRA1 and RTN1. In terms of processing, under stress conditions, phosphorylated in the C-terminal on many serine and threonine residues. Phosphorylated in vitro by PKA. Phosphorylation enhanced by increased intracellular cAMP levels. Homocysteine induces dephosphorylation. Phosphorylation by SGK1 is cell cycle dependent.

It localises to the cytoplasm. It is found in the cytosol. The protein resides in the cytoskeleton. The protein localises to the microtubule organizing center. Its subcellular location is the centrosome. It localises to the nucleus. It is found in the cell membrane. Functionally, stress-responsive protein involved in hormone responses, cell growth, and differentiation. Acts as a tumor suppressor in many cell types. Necessary but not sufficient for p53/TP53-mediated caspase activation and apoptosis. Has a role in cell trafficking notably of the Schwann cell and is necessary for the maintenance and development of the peripheral nerve myelin sheath. Required for vesicular recycling of CDH1 and TF. May also function in lipid trafficking. Protects cells from spindle disruption damage. Functions in p53/TP53-dependent mitotic spindle checkpoint. Regulates microtubule dynamics and maintains euploidy. In Bos taurus (Bovine), this protein is Protein NDRG1 (NDRG1).